The sequence spans 66 residues: U1-theraphotoxin-Cg1d 2 (66 aa).

The signal sequence occupies residues 1 to 21; that stretch reads MKMSALFPIFGLPLLFCNSFA. The propeptide occupies 22 to 29; sequence AELKATGR. 3 disulfides stabilise this stretch: Cys31/Cys46, Cys38/Cys51, and Cys45/Cys58. Position 63 is a proline amide (Pro63).

This sequence belongs to the neurotoxin 10 (Hwtx-1) family. 46 (Jztx-7/10/12) subfamily. Expressed by the venom gland.

The protein resides in the secreted. Its function is as follows. Probable ion channel inhibitor. The polypeptide is U1-theraphotoxin-Cg1d 2 (Chilobrachys guangxiensis (Chinese earth tiger tarantula)).